The sequence spans 665 residues: Translation factor guf1, mitochondrial (665 aa).

A mitochondrion-targeting transit peptide spans 1–40; sequence MRGCLQLARWLSAAPTRPAASHWPGLCAAPRFFSHSAILR. Residues 67–247 enclose the tr-type G domain; the sequence is ERYRNFCIVA…TVVDKIPAPI (181 aa). GTP-binding positions include 76–83, 140–144, and 194–197; these read AHVDHGKS, DTPGH, and NKVD.

It belongs to the TRAFAC class translation factor GTPase superfamily. Classic translation factor GTPase family. LepA subfamily.

The protein resides in the mitochondrion inner membrane. The catalysed reaction is GTP + H2O = GDP + phosphate + H(+). In terms of biological role, promotes mitochondrial protein synthesis. May act as a fidelity factor of the translation reaction, by catalyzing a one-codon backward translocation of tRNAs on improperly translocated ribosomes. Binds to mitochondrial ribosomes in a GTP-dependent manner. This Aspergillus terreus (strain NIH 2624 / FGSC A1156) protein is Translation factor guf1, mitochondrial (guf1).